The primary structure comprises 117 residues: Large ribosomal subunit protein uL18 (117 aa).

It belongs to the universal ribosomal protein uL18 family. As to quaternary structure, part of the 50S ribosomal subunit; part of the 5S rRNA/L5/L18/L25 subcomplex. Contacts the 5S and 23S rRNAs.

Its function is as follows. This is one of the proteins that bind and probably mediate the attachment of the 5S RNA into the large ribosomal subunit, where it forms part of the central protuberance. This is Large ribosomal subunit protein uL18 from Leuconostoc mesenteroides subsp. mesenteroides (strain ATCC 8293 / DSM 20343 / BCRC 11652 / CCM 1803 / JCM 6124 / NCDO 523 / NBRC 100496 / NCIMB 8023 / NCTC 12954 / NRRL B-1118 / 37Y).